We begin with the raw amino-acid sequence, 391 residues long: Galactokinase (391 aa).

34 to 37 is a binding site for substrate; it reads EHTD. 121 to 127 lines the ATP pocket; the sequence is GAGLSSS. Mg(2+)-binding residues include Ser-127 and Glu-159. The Proton acceptor role is filled by Asp-171. Tyr-220 contributes to the substrate binding site.

Belongs to the GHMP kinase family. GalK subfamily.

It is found in the cytoplasm. It carries out the reaction alpha-D-galactose + ATP = alpha-D-galactose 1-phosphate + ADP + H(+). Its pathway is carbohydrate metabolism; galactose metabolism. Functionally, catalyzes the transfer of the gamma-phosphate of ATP to D-galactose to form alpha-D-galactose-1-phosphate (Gal-1-P). This chain is Galactokinase, found in Roseiflexus sp. (strain RS-1).